Here is a 275-residue protein sequence, read N- to C-terminus: Ribosomal RNA small subunit methyltransferase A (275 aa).

6 residues coordinate S-adenosyl-L-methionine: asparagine 28, leucine 30, glycine 55, glutamate 77, aspartate 103, and asparagine 123.

The protein belongs to the class I-like SAM-binding methyltransferase superfamily. rRNA adenine N(6)-methyltransferase family. RsmA subfamily.

The protein resides in the cytoplasm. It catalyses the reaction adenosine(1518)/adenosine(1519) in 16S rRNA + 4 S-adenosyl-L-methionine = N(6)-dimethyladenosine(1518)/N(6)-dimethyladenosine(1519) in 16S rRNA + 4 S-adenosyl-L-homocysteine + 4 H(+). Its function is as follows. Specifically dimethylates two adjacent adenosines (A1518 and A1519) in the loop of a conserved hairpin near the 3'-end of 16S rRNA in the 30S particle. May play a critical role in biogenesis of 30S subunits. This is Ribosomal RNA small subunit methyltransferase A from Allorhizobium ampelinum (strain ATCC BAA-846 / DSM 112012 / S4) (Agrobacterium vitis (strain S4)).